The primary structure comprises 63 residues: Small ribosomal subunit protein eS27 (63 aa).

The Zn(2+) site is built by cysteine 18, cysteine 21, cysteine 37, and cysteine 40. A C4-type zinc finger spans residues 18-40 (CIDCGNEQIVFSHPATKVRCLIC).

This sequence belongs to the eukaryotic ribosomal protein eS27 family. As to quaternary structure, part of the 30S ribosomal subunit. It depends on Zn(2+) as a cofactor.

The sequence is that of Small ribosomal subunit protein eS27 from Pyrococcus furiosus (strain ATCC 43587 / DSM 3638 / JCM 8422 / Vc1).